The primary structure comprises 865 residues: Alanine--tRNA ligase (865 aa).

Zn(2+)-binding residues include His-556, His-560, Cys-660, and His-664.

The protein belongs to the class-II aminoacyl-tRNA synthetase family. Zn(2+) is required as a cofactor.

The protein localises to the cytoplasm. The catalysed reaction is tRNA(Ala) + L-alanine + ATP = L-alanyl-tRNA(Ala) + AMP + diphosphate. Functionally, catalyzes the attachment of alanine to tRNA(Ala) in a two-step reaction: alanine is first activated by ATP to form Ala-AMP and then transferred to the acceptor end of tRNA(Ala). Also edits incorrectly charged Ser-tRNA(Ala) and Gly-tRNA(Ala) via its editing domain. This is Alanine--tRNA ligase from Vesicomyosocius okutanii subsp. Calyptogena okutanii (strain HA).